The chain runs to 1153 residues: PPi-type phosphoenolpyruvate carboxykinase 2 (1153 aa).

The stretch at 1085 to 1131 forms a coiled coil; that stretch reads RQKLEVAKLNKDLAYLNKTIAEKPRLVETLNKQIAAVKEELQYVSSE.

This sequence belongs to the PPi-type phosphoenolpyruvate carboxykinase family. As to quaternary structure, monomer and trimer; forms heterotrimers with PEPCK1 and PEPCK3.

The protein resides in the cytoplasm. It is found in the cytosol. It catalyses the reaction oxaloacetate + diphosphate = phosphoenolpyruvate + phosphate + CO2. Functionally, inorganic pyrophosphate (PPi)-dependent phosphoenolpyruvate carboxykinase, which regulates the carbon flow of the central metabolism by fixing CO(2) to phosphoenolpyruvate to produce oxaloacetate. Can also produce pyruvate and diphosphate from phosphoenolpyruvate and phosphate. The sequence is that of PPi-type phosphoenolpyruvate carboxykinase 2 from Entamoeba histolytica (strain ATCC 30459 / HM-1:IMSS / ABRM).